Reading from the N-terminus, the 459-residue chain is MSAFTPREVVSELDRYIVGQNAAKRAVAIALRNRWRRQQVDDDLRDEIHPKNIIMIGPTGVGKTEIARRLAKLAQAPFVKVEASKFTEVGYVGRDVESMIRDLVEAAIALVREEETEKVGPRAEELAEDRLIELMQGGGVKSSSATPPFGFAPPPPPPVQRVSDSAREKFRAQLRAGTLDDVEVEVETAESSPTFMRGFSGQGMEEIGVNLQDLFKNVPGMNKTRRRRVRVPEALQLLRKEEAAKLVDPDRVQREAVARAEMNGIIFIDEIDKIASREGGKGGGGPDVSREGVQRDILPIVEGSTINTKYGVVKTDHMLFIAAGAFHVSKPSDLIPELQGRFPIRVELEPLTGEDLVRILREPKNSLLRQYTALLSTEGVRLSFTDDAVTELARIAQQANESTANIGARRLHTILERLLDEVSFSASEMGPRDFQVDAAYVRERLAAIVQDEDLSRYIL.

Residues valine 18, 60–65 (GVGKTE), aspartate 269, glutamate 337, and arginine 409 each bind ATP.

This sequence belongs to the ClpX chaperone family. HslU subfamily. In terms of assembly, a double ring-shaped homohexamer of HslV is capped on each side by a ring-shaped HslU homohexamer. The assembly of the HslU/HslV complex is dependent on binding of ATP.

The protein resides in the cytoplasm. In terms of biological role, ATPase subunit of a proteasome-like degradation complex; this subunit has chaperone activity. The binding of ATP and its subsequent hydrolysis by HslU are essential for unfolding of protein substrates subsequently hydrolyzed by HslV. HslU recognizes the N-terminal part of its protein substrates and unfolds these before they are guided to HslV for hydrolysis. This chain is ATP-dependent protease ATPase subunit HslU, found in Myxococcus xanthus (strain DK1622).